An 804-amino-acid polypeptide reads, in one-letter code: Probable phosphoketolase (804 aa).

The protein belongs to the XFP family. It depends on thiamine diphosphate as a cofactor.

This is Probable phosphoketolase from Mycolicibacterium paratuberculosis (strain ATCC BAA-968 / K-10) (Mycobacterium paratuberculosis).